The following is a 339-amino-acid chain: Phenylalanine--tRNA ligase alpha subunit (339 aa).

Glutamate 253 contacts Mg(2+).

This sequence belongs to the class-II aminoacyl-tRNA synthetase family. Phe-tRNA synthetase alpha subunit type 1 subfamily. As to quaternary structure, tetramer of two alpha and two beta subunits. Mg(2+) is required as a cofactor.

It is found in the cytoplasm. The enzyme catalyses tRNA(Phe) + L-phenylalanine + ATP = L-phenylalanyl-tRNA(Phe) + AMP + diphosphate + H(+). The chain is Phenylalanine--tRNA ligase alpha subunit from Chromohalobacter salexigens (strain ATCC BAA-138 / DSM 3043 / CIP 106854 / NCIMB 13768 / 1H11).